Here is a 93-residue protein sequence, read N- to C-terminus: MKILLLTLVVVTIVCLDLAYTRTCYRTHPYKPETCPPGQNLCYKKSWCDAFCSSRGKVIELGCTAKCPTVKHGKDINCCATDNCNTVANWKSR.

Positions 1 to 21 are cleaved as a signal peptide; sequence MKILLLTLVVVTIVCLDLAYT. Disulfide bonds link Cys24/Cys42, Cys35/Cys63, Cys48/Cys52, Cys67/Cys78, and Cys79/Cys84.

Belongs to the three-finger toxin family. Long-chain subfamily. Type II alpha-neurotoxin sub-subfamily. In terms of tissue distribution, expressed by the venom gland.

It is found in the secreted. Binds with high affinity to muscular (alpha-1/CHRNA1) and neuronal (alpha-7/CHRNA7) nicotinic acetylcholine receptor (nAChR) and inhibits acetylcholine from binding to the receptor, thereby impairing neuromuscular and neuronal transmission. The protein is Long neurotoxin 2 of Hydrophis hardwickii (Hardwick's spine-bellied seasnake).